The chain runs to 510 residues: ATP synthase subunit alpha (510 aa).

Residue 169-176 (GDRQTGKT) coordinates ATP.

This sequence belongs to the ATPase alpha/beta chains family. In terms of assembly, F-type ATPases have 2 components, CF(1) - the catalytic core - and CF(0) - the membrane proton channel. CF(1) has five subunits: alpha(3), beta(3), gamma(1), delta(1), epsilon(1). CF(0) has three main subunits: a(1), b(2) and c(9-12). The alpha and beta chains form an alternating ring which encloses part of the gamma chain. CF(1) is attached to CF(0) by a central stalk formed by the gamma and epsilon chains, while a peripheral stalk is formed by the delta and b chains.

The protein localises to the cell inner membrane. The catalysed reaction is ATP + H2O + 4 H(+)(in) = ADP + phosphate + 5 H(+)(out). In terms of biological role, produces ATP from ADP in the presence of a proton gradient across the membrane. The alpha chain is a regulatory subunit. The sequence is that of ATP synthase subunit alpha from Rickettsia massiliae (strain Mtu5).